The following is a 322-amino-acid chain: Protease HtpX homolog (322 aa).

2 helical membrane-spanning segments follow: residues 19–39 (ILLILFPCLVAVLTYLFCYLL) and 61–81 (FINLIPYIIGGVLVWFIIAYF). His-165 serves as a coordination point for Zn(2+). The active site involves Glu-166. Position 169 (His-169) interacts with Zn(2+). A run of 2 helical transmembrane segments spans residues 175-195 (VRLLIISIVFVGIFSMLAQIA) and 216-236 (ILILVLAMIVAAIGYFFATLM). Zn(2+) is bound at residue Glu-245.

This sequence belongs to the peptidase M48B family. Requires Zn(2+) as cofactor.

The protein localises to the cell inner membrane. The chain is Protease HtpX homolog from Bacteroides fragilis (strain YCH46).